The following is a 109-amino-acid chain: UPF0122 protein CLH_1195 (109 aa).

It belongs to the UPF0122 family.

Might take part in the signal recognition particle (SRP) pathway. This is inferred from the conservation of its genetic proximity to ftsY/ffh. May be a regulatory protein. This Clostridium botulinum (strain Alaska E43 / Type E3) protein is UPF0122 protein CLH_1195.